The chain runs to 86 residues: Large ribosomal subunit protein bL27 (86 aa).

Positions 1 to 10 are enriched in gly residues; the sequence is MAQKKGGGST. The disordered stretch occupies residues 1–20; it reads MAQKKGGGSTRNGRDSESKR.

This sequence belongs to the bacterial ribosomal protein bL27 family.

In Bordetella parapertussis (strain 12822 / ATCC BAA-587 / NCTC 13253), this protein is Large ribosomal subunit protein bL27.